Consider the following 1685-residue polypeptide: Collagen alpha-5(IV) chain (1685 aa).

The signal sequence occupies residues 1-26 (MKLRGVSLAAGLFLLALSLWGQPAEA). The interval 27 to 41 (AACYGCSPGSKCDCS) is nonhelical region (NC2). Residues 42 to 1456 (GIKGEKGERG…QGPPGPPGTS (1415 aa)) are triple-helical region. Residues 49 to 1459 (ERGFPGLEGH…PGPPGTSSVA (1411 aa)) form a disordered region. The segment covering 52–61 (FPGLEGHPGL) has biased composition (low complexity). Positions 62 to 73 (PGFPGPEGPPGP) are enriched in pro residues. Asparagine 125 carries an N-linked (GlcNAc...) asparagine glycan. Positions 188-212 (TGIPGPIGPPGPPGLMGPPGPPGLP) are enriched in pro residues. The span at 214–225 (PKGNMGLNFQGP) shows a compositional bias: low complexity. Residues 246–257 (EQKRPIDVEFQK) show a composition bias toward basic and acidic residues. A compositionally biased stretch (pro residues) spans 266–281 (RGPPGPPGIRGPPGPP). 2 stretches are compositionally biased toward basic and acidic residues: residues 284-305 (EKGE…KDGE) and 324-333 (PGRDGEKGQK). Residues 413-430 (PPGISIPGPPGLDGQPGA) are compositionally biased toward low complexity. Composition is skewed to pro residues over residues 431–445 (PGLP…PHIP), 493–505 (PGQP…PGPP), 620–630 (MGPPGFGPPGP), and 709–727 (PGPP…PGAP). A compositionally biased stretch (low complexity) spans 788 to 797 (RTGLDGLPGP). 2 stretches are compositionally biased toward pro residues: residues 848–859 (PGPPGLDVPGPP) and 868–880 (PGAP…PGSP). Composition is skewed to low complexity over residues 882-901 (LPGK…MGMM), 912-931 (IPGR…QGQP), 983-999 (YQGL…SGQP), 1010-1026 (NPGL…PGLK), and 1111-1120 (TPGAKGQPGL). The segment covering 1139 to 1148 (PGNPGLPGEP) has biased composition (pro residues). Composition is skewed to gly residues over residues 1149-1158 (GPVGGGGHPG) and 1202-1211 (GQKGDGGLPG). 2 stretches are compositionally biased toward pro residues: residues 1234–1243 (QGPPGPPGSP) and 1256–1274 (PQGP…PPGL). Low complexity predominate over residues 1295–1308 (LPGLKGDQGPPGLQ). The segment covering 1353 to 1362 (IGPPGPPGLP) has biased composition (pro residues). Residues 1461 to 1685 (GFLITRHSQT…SRCQVCMKRT (225 aa)) form the Collagen IV NC1 domain. Disulfide bonds link cysteine 1476–cysteine 1567, cysteine 1509–cysteine 1564, cysteine 1521–cysteine 1527, cysteine 1586–cysteine 1681, cysteine 1620–cysteine 1678, and cysteine 1632–cysteine 1638. Methionine 1549 is covalently cross-linked (S-Lysyl-methionine sulfilimine (Met-Lys) (interchain with K-1667)). An S-Lysyl-methionine sulfilimine (Lys-Met) (interchain with M-1549) cross-link involves residue lysine 1667.

This sequence belongs to the type IV collagen family. There are six type IV collagen isoforms, alpha 1(IV)-alpha 6(IV), each of which can form a triple helix structure with 2 other chains to generate type IV collagen network. Prolines at the third position of the tripeptide repeating unit (G-X-Y) are hydroxylated in some or all of the chains. In terms of processing, type IV collagens contain numerous cysteine residues which are involved in inter- and intramolecular disulfide bonding. 12 of these, located in the NC1 domain, are conserved in all known type IV collagens. Post-translationally, the trimeric structure of the NC1 domains is stabilized by covalent bonds between Lys and Met residues. Isoform 2 is found in kidney.

It is found in the secreted. The protein resides in the extracellular space. The protein localises to the extracellular matrix. Its subcellular location is the basement membrane. Its function is as follows. Type IV collagen is the major structural component of glomerular basement membranes (GBM), forming a 'chicken-wire' meshwork together with laminins, proteoglycans and entactin/nidogen. The protein is Collagen alpha-5(IV) chain (COL4A5) of Homo sapiens (Human).